The chain runs to 102 residues: N(4)-acetylcytidine amidohydrolase (102 aa).

The ASCH domain maps to 6 to 93; it reads TFFSRFEQDI…IKEIYPGLDE (88 aa). Lys20 functions as the Proton acceptor in the catalytic mechanism. Catalysis depends on Thr23, which acts as the Nucleophile. Glu73 serves as the catalytic Proton donor.

Belongs to the N(4)-acetylcytidine amidohydrolase family.

The catalysed reaction is N(4)-acetylcytidine + H2O = cytidine + acetate + H(+). It carries out the reaction N(4)-acetyl-2'-deoxycytidine + H2O = 2'-deoxycytidine + acetate + H(+). It catalyses the reaction N(4)-acetylcytosine + H2O = cytosine + acetate + H(+). Catalyzes the hydrolysis of N(4)-acetylcytidine (ac4C). This chain is N(4)-acetylcytidine amidohydrolase, found in Serratia proteamaculans (strain 568).